The sequence spans 437 residues: Phosphoribosylamine--glycine ligase (437 aa).

The ATP-grasp domain occupies 110-322; it reads KNLLRSADIP…LVEVMQAVVD (213 aa). 142 to 203 provides a ligand contact to ATP; it reads EPTDPVNVVV…EERLTGPEVS (62 aa). Residues Glu-292 and Asn-294 each coordinate Mg(2+).

The protein belongs to the GARS family. It depends on Mg(2+) as a cofactor. Mn(2+) serves as cofactor.

It carries out the reaction 5-phospho-beta-D-ribosylamine + glycine + ATP = N(1)-(5-phospho-beta-D-ribosyl)glycinamide + ADP + phosphate + H(+). It functions in the pathway purine metabolism; IMP biosynthesis via de novo pathway; N(1)-(5-phospho-D-ribosyl)glycinamide from 5-phospho-alpha-D-ribose 1-diphosphate: step 2/2. The polypeptide is Phosphoribosylamine--glycine ligase (Rhodopirellula baltica (strain DSM 10527 / NCIMB 13988 / SH1)).